Here is a 522-residue protein sequence, read N- to C-terminus: Insulinoma-associated protein 1 (522 aa).

Over residues 1 to 12 the composition is skewed to basic residues; that stretch reads MPRGFLVKRSKK. Positions 1-20 are SNAG domain; sequence MPRGFLVKRSKKSTPVSYRI. Disordered stretches follow at residues 1–112 and 182–235; these read MPRG…SREH and AAEA…KPKA. The interval 2 to 7 is required and sufficient for interaction with KDM1A; sequence PRGFLV. The tract at residues 43–57 is necessary for interaction with CCND1; that stretch reads PPAPGPGPVPGPLQP. Positions 43 to 61 are enriched in pro residues; the sequence is PPAPGPGPVPGPLQPPPPT. Composition is skewed to low complexity over residues 66 to 75 and 212 to 228; these read AALAAALACA and ASAA…AKAP. The segment at 277–297 adopts a C2H2-type 1; atypical zinc-finger fold; sequence FICQLCKEEYADPFALAQHKC. The segment at 305-327 adopts a C2H2-type 2 zinc-finger fold; the sequence is YRCPECAKVFSCPANLASHRRWH. A disordered region spans residues 325-373; the sequence is RWHKPRPAPAAARACEPETPARAEAREATGGGGSDRDTPSPGGVSESGS. Residues 339–351 are compositionally biased toward basic and acidic residues; it reads CEPETPARAEARE. 3 consecutive C2H2-type zinc fingers follow at residues 378 to 400, 453 to 476, and 481 to 504; these read YECH…LLAH, HLCP…RLLH, and FPCK…NKCH.

This sequence belongs to the INSM1 family. Interacts (via the N-terminal region) with CCND1 (via cyclin N-terminal domain); the interaction competes with the binding of CCND1 to CDK4 during cell cycle progression and increases its transcriptional repressor activity. Interacts with HDAC3; the interaction increases its transcriptional repressor activity. Interacts (via the SNAG domain) with HDAC1. Interacts (via the SNAG domain) with HDAC2. Interacts (via the SNAG domain) with KDM1A. Interacts (via the SNAG domain) with RCOR1. Interacts with SORBS1.

It is found in the nucleus. Functionally, sequence-specific DNA-binding transcriptional regulator that plays a key role in neurogenesis and neuroendocrine cell differentiation during embryonic and/or fetal development. Binds to the consensus sequence 5'-[TG][TC][TC][TT][GA]GGG[CG]A-3' in target promoters. Acts as a transcriptional repressor of NEUROD1 and INS expression via its interaction with cyclin CCND1 in a cell cycle-independent manner. Negatively regulates skeletal muscle-specific gene expression in endocrine cells of the pituitary by inhibiting the Notch signaling pathway. Represses target gene transcription by recruiting chromatin-modifying factors, such as HDAC1, HDAC2, HDAC3, KDM1A and RCOR1 histone deacetylases. Binds to its own promoter, suggesting autoregulation as a self-control feedback mechanism. Competes with histone H3 for the same binding site on the histone demethylase complex formed by KDM1A and RCOR1, and thereby inhibits demethylation of histone H3 at 'Lys-4'. Promotes the generation and expansion of neuronal basal progenitor cells in the developing neocortex. Involved in the differentiation of endocrine cells of the developing anterior pituitary gland, of the pancreas and intestine, and of sympatho-adrenal cells in the peripheral nervous system. Promotes cell cycle signaling arrest and inhibition of cellular proliferation. This Bos taurus (Bovine) protein is Insulinoma-associated protein 1 (INSM1).